Consider the following 198-residue polypeptide: MYDYIKGQLTKITAKYIVVEANGLGYMINVANPYSFTHSVNQLVTIYLHQVIREDAHLLFGFHTEDEKDVFLKLISVSGIGPTTALAIVAVDDNEGLVNAIDNSDIKYLMKFPKIGKKTAQQMVLDLAGKFVEAPQETGHTKARSNKAGNTQLDEAIEALLALGYTATELKKIRAFFEGTSETAEQYIKSALKLLMKG.

Residues methionine 1–histidine 63 are domain I. A domain II region spans residues threonine 64 to lysine 142. The interval alanine 143–lysine 147 is flexible linker. The segment at alanine 148 to glycine 198 is domain III.

This sequence belongs to the RuvA family. Homotetramer. Forms an RuvA(8)-RuvB(12)-Holliday junction (HJ) complex. HJ DNA is sandwiched between 2 RuvA tetramers; dsDNA enters through RuvA and exits via RuvB. An RuvB hexamer assembles on each DNA strand where it exits the tetramer. Each RuvB hexamer is contacted by two RuvA subunits (via domain III) on 2 adjacent RuvB subunits; this complex drives branch migration. In the full resolvosome a probable DNA-RuvA(4)-RuvB(12)-RuvC(2) complex forms which resolves the HJ.

Its subcellular location is the cytoplasm. The RuvA-RuvB-RuvC complex processes Holliday junction (HJ) DNA during genetic recombination and DNA repair, while the RuvA-RuvB complex plays an important role in the rescue of blocked DNA replication forks via replication fork reversal (RFR). RuvA specifically binds to HJ cruciform DNA, conferring on it an open structure. The RuvB hexamer acts as an ATP-dependent pump, pulling dsDNA into and through the RuvAB complex. HJ branch migration allows RuvC to scan DNA until it finds its consensus sequence, where it cleaves and resolves the cruciform DNA. This chain is Holliday junction branch migration complex subunit RuvA, found in Streptococcus pyogenes serotype M49 (strain NZ131).